The sequence spans 416 residues: Splicing factor U2AF 50 kDa subunit (416 aa).

Basic and acidic residues predominate over residues 1 to 10; it reads MGYDDRERDR. The disordered stretch occupies residues 1–47; it reads MGYDDRERDRERRRHRSRSRDRHRERSRDRRHHRNSRRKPSLYWDVP. Composition is skewed to basic residues over residues 11 to 21 and 29 to 40; these read ERRRHRSRSRD and DRRHHRNSRRKP. 3 consecutive RRM domains span residues 93 to 175, 207 to 285, and 318 to 408; these read RRLY…RPHD, HKIF…RASV, and EVLC…YFDP.

Belongs to the splicing factor SR family. In terms of assembly, forms a heterodimer with the U2AF small subunit.

The protein localises to the nucleus. Functionally, necessary for the splicing of pre-mRNA. Binds to the polypyrimidine tract of introns early during spliceosome assembly. The protein is Splicing factor U2AF 50 kDa subunit (U2af50) of Drosophila melanogaster (Fruit fly).